Consider the following 609-residue polypeptide: Major facilitator superfamily domain-containing protein 6-like protein A (609 aa).

A run of 2 helical transmembrane segments spans residues 41–61 (LGLGAPLVGIIFGFKHAVHLL) and 78–98 (FFIMTSLLLSAGVGSLFAYYP). The segment at 201-241 (SGKAQKVMSSKSAASNSKQRSSLNNHTSPYATHPNVSHHPS) is disordered. Residues 207 to 230 (VMSSKSAASNSKQRSSLNNHTSPY) are compositionally biased toward polar residues. 9 helical membrane-spanning segments follow: residues 265-285 (IFLIVLVLVIIWEILAAPLEW), 307-327 (LWIWGYLGASMGSIFITFLVD), 340-360 (VFFHFFCYGGFLIGTLFLSTL), 388-408 (IVLTALTVFLLGAVGSTTQNF), 420-440 (ELYMGLSIAVGLLSELTLYFF), 452-472 (WMVALGLFSLGVQCLYYSFLW), 475-495 (WSVLAIQILNAFSSGVIWWAI), 513-535 (LALRWLAYGCGSSTGSFASGFII), and 541-561 (AVLYQACCITLLLWIIIFLLV).

Belongs to the major facilitator superfamily. MFSD6 family.

The protein resides in the membrane. The sequence is that of Major facilitator superfamily domain-containing protein 6-like protein A (mfsd6l-a) from Xenopus laevis (African clawed frog).